Consider the following 460-residue polypeptide: Polygalacturonase (460 aa).

A signal peptide spans 1–26 (MALKTQLLWSFVVVFVVSFSTTSCSG). N280 is a glycosylation site (N-linked (GlcNAc...) asparagine). D292 (proton donor) is an active-site residue. The active site involves H315. Residue N421 is glycosylated (N-linked (GlcNAc...) asparagine).

The protein belongs to the glycosyl hydrolase 28 family.

The protein localises to the secreted. It localises to the cell wall. It carries out the reaction (1,4-alpha-D-galacturonosyl)n+m + H2O = (1,4-alpha-D-galacturonosyl)n + (1,4-alpha-D-galacturonosyl)m.. Acts in concert with the pectinesterase, in the ripening process. Is involved in cell wall metabolism, specifically in polyuronide degradation. This is Polygalacturonase from Malus domestica (Apple).